The primary structure comprises 150 residues: Large ribosomal subunit protein bL9 (150 aa).

The protein belongs to the bacterial ribosomal protein bL9 family.

Binds to the 23S rRNA. This chain is Large ribosomal subunit protein bL9, found in Shewanella halifaxensis (strain HAW-EB4).